The primary structure comprises 493 residues: Ketol-acid reductoisomerase (NADP(+)) (493 aa).

One can recognise a KARI N-terminal Rossmann domain in the interval 15 to 208; it reads AQLGKCRFMQ…GGDRAGVLES (194 aa). Residues 45 to 48, Arg-68, Arg-76, Ser-78, and 108 to 110 each bind NADP(+); these read CGAQ and DKQ. His-132 is an active-site residue. Gly-158 lines the NADP(+) pocket. 2 KARI C-terminal knotted domains span residues 209 to 344 and 345 to 486; these read SFVA…NAPA and FAGK…MKDM. Mg(2+) is bound by residues Asp-217, Glu-221, Glu-389, and Glu-393. Ser-414 contacts substrate.

This sequence belongs to the ketol-acid reductoisomerase family. Mg(2+) is required as a cofactor.

It catalyses the reaction (2R)-2,3-dihydroxy-3-methylbutanoate + NADP(+) = (2S)-2-acetolactate + NADPH + H(+). The catalysed reaction is (2R,3R)-2,3-dihydroxy-3-methylpentanoate + NADP(+) = (S)-2-ethyl-2-hydroxy-3-oxobutanoate + NADPH + H(+). It participates in amino-acid biosynthesis; L-isoleucine biosynthesis; L-isoleucine from 2-oxobutanoate: step 2/4. It functions in the pathway amino-acid biosynthesis; L-valine biosynthesis; L-valine from pyruvate: step 2/4. Functionally, involved in the biosynthesis of branched-chain amino acids (BCAA). Catalyzes an alkyl-migration followed by a ketol-acid reduction of (S)-2-acetolactate (S2AL) to yield (R)-2,3-dihydroxy-isovalerate. In the isomerase reaction, S2AL is rearranged via a Mg-dependent methyl migration to produce 3-hydroxy-3-methyl-2-ketobutyrate (HMKB). In the reductase reaction, this 2-ketoacid undergoes a metal-dependent reduction by NADPH to yield (R)-2,3-dihydroxy-isovalerate. The sequence is that of Ketol-acid reductoisomerase (NADP(+)) from Aeromonas hydrophila subsp. hydrophila (strain ATCC 7966 / DSM 30187 / BCRC 13018 / CCUG 14551 / JCM 1027 / KCTC 2358 / NCIMB 9240 / NCTC 8049).